Reading from the N-terminus, the 68-residue chain is ATP synthase subunit c (68 aa).

2 helical membrane-spanning segments follow: residues 4 to 24 and 45 to 65; these read IAAAIAIGLSALGAGIGNGLI and IMFIGIGLVEALPIIGVVIAF.

It belongs to the ATPase C chain family. In terms of assembly, F-type ATPases have 2 components, F(1) - the catalytic core - and F(0) - the membrane proton channel. F(1) has five subunits: alpha(3), beta(3), gamma(1), delta(1), epsilon(1). F(0) has three main subunits: a(1), b(2) and c(10-14). The alpha and beta chains form an alternating ring which encloses part of the gamma chain. F(1) is attached to F(0) by a central stalk formed by the gamma and epsilon chains, while a peripheral stalk is formed by the delta and b chains.

Its subcellular location is the cell membrane. In terms of biological role, f(1)F(0) ATP synthase produces ATP from ADP in the presence of a proton or sodium gradient. F-type ATPases consist of two structural domains, F(1) containing the extramembraneous catalytic core and F(0) containing the membrane proton channel, linked together by a central stalk and a peripheral stalk. During catalysis, ATP synthesis in the catalytic domain of F(1) is coupled via a rotary mechanism of the central stalk subunits to proton translocation. Functionally, key component of the F(0) channel; it plays a direct role in translocation across the membrane. A homomeric c-ring of between 10-14 subunits forms the central stalk rotor element with the F(1) delta and epsilon subunits. The chain is ATP synthase subunit c from Staphylococcus saprophyticus subsp. saprophyticus (strain ATCC 15305 / DSM 20229 / NCIMB 8711 / NCTC 7292 / S-41).